The primary structure comprises 178 residues: Enhancer of split m5 protein (178 aa).

In terms of domain architecture, bHLH spans 18-73 (YLKVKKPLLERQRRARMNKCLDTLKTLVAEFQGDDAILRMDKAEMLEAALVFMRKQ). Residues 89 to 122 (FKNGYMNAVSEISRVMACTPAMSVDVGKTVMTHL) form the Orange domain. Over residues 135-165 (VQTSVTTSTPRPLSPASSGYHSDNEDSQSAA) the composition is skewed to polar residues. The segment at 135 to 178 (VQTSVTTSTPRPLSPASSGYHSDNEDSQSAASPKPVEETMWRPW) is disordered. Residues 169–178 (PVEETMWRPW) show a composition bias toward basic and acidic residues. The WRPW motif signature appears at 175 to 178 (WRPW).

As to quaternary structure, transcription repression requires formation of a complex with a corepressor protein (Groucho). Forms homodimers.

The protein localises to the nucleus. Participates in the control of cell fate choice by uncommitted neuroectodermal cells in the embryo. Transcriptional repressor. Binds DNA on N-box motifs: 5'-CACNAG-3'. The chain is Enhancer of split m5 protein from Drosophila melanogaster (Fruit fly).